The primary structure comprises 107 residues: Heme-degrading monooxygenase (107 aa).

One can recognise an ABM domain in the interval 2–94 (IIVTNTTKIT…YILDNKIAYY (93 aa)). Asn6 is a binding site for Fe cation. His76 is a binding site for heme.

This sequence belongs to the antibiotic biosynthesis monooxygenase family. Heme-degrading monooxygenase IsdG subfamily. In terms of assembly, homodimer.

It is found in the cytoplasm. The enzyme catalyses heme b + 3 reduced [NADPH--hemoprotein reductase] + 3 O2 = biliverdin IXalpha + CO + Fe(2+) + 3 oxidized [NADPH--hemoprotein reductase] + 3 H2O + H(+). In terms of biological role, allows bacterial pathogens to use the host heme as an iron source. Catalyzes the oxidative degradation of the heme macrocyclic porphyrin ring to the biliverdin in the presence of a suitable electron donor such as ascorbate or NADPH--cytochrome P450 reductase, with subsequent release of free iron. The sequence is that of Heme-degrading monooxygenase from Bacillus mycoides (strain KBAB4) (Bacillus weihenstephanensis).